Here is a 1358-residue protein sequence, read N- to C-terminus: DNA-directed RNA polymerase subunit beta (1358 aa).

The protein belongs to the RNA polymerase beta chain family. In terms of assembly, the RNAP catalytic core consists of 2 alpha, 1 beta, 1 beta' and 1 omega subunit. When a sigma factor is associated with the core the holoenzyme is formed, which can initiate transcription.

It catalyses the reaction RNA(n) + a ribonucleoside 5'-triphosphate = RNA(n+1) + diphosphate. DNA-dependent RNA polymerase catalyzes the transcription of DNA into RNA using the four ribonucleoside triphosphates as substrates. The protein is DNA-directed RNA polymerase subunit beta of Francisella tularensis subsp. novicida (strain U112).